Consider the following 112-residue polypeptide: uncharacterized protein (112 aa).

It to Buchnera BUsg564.

This is an uncharacterized protein from Buchnera aphidicola subsp. Acyrthosiphon pisum (strain APS) (Acyrthosiphon pisum symbiotic bacterium).